We begin with the raw amino-acid sequence, 117 residues long: RutC family protein HD_0322 (117 aa).

The protein belongs to the RutC family.

This Haemophilus ducreyi (strain 35000HP / ATCC 700724) protein is RutC family protein HD_0322.